Here is a 172-residue protein sequence, read N- to C-terminus: Large ribosomal subunit protein uL10 (172 aa).

It belongs to the universal ribosomal protein uL10 family. In terms of assembly, part of the ribosomal stalk of the 50S ribosomal subunit. The N-terminus interacts with L11 and the large rRNA to form the base of the stalk. The C-terminus forms an elongated spine to which L12 dimers bind in a sequential fashion forming a multimeric L10(L12)X complex.

Functionally, forms part of the ribosomal stalk, playing a central role in the interaction of the ribosome with GTP-bound translation factors. This chain is Large ribosomal subunit protein uL10, found in Pelodictyon phaeoclathratiforme (strain DSM 5477 / BU-1).